Reading from the N-terminus, the 24-residue chain is Arginine attenuator peptide (24 aa).

Belongs to the arginine attenuator peptide family.

Arginine attenuator peptide (AAP) that has a regulatory role in the production of arginine-specific carbamoyl phosphate synthetase. Encoded by an upstream open reading frame (uORF) within the 5'-leader region of arginine-specific carbamoyl phosphate synthetase small chain (arg-2) mRNA, it attenuates the translation of the downstream arg-2 ORF. In the presence of high concentrations of arginine, ribosomes translating the uORF encoding AAP stall at the termination codon, resulting in reduced translation from the downstream arg-2 initiation codon. The sequence is that of Arginine attenuator peptide from Neurospora crassa (strain ATCC 24698 / 74-OR23-1A / CBS 708.71 / DSM 1257 / FGSC 987).